A 464-amino-acid chain; its full sequence is Argininosuccinate lyase (464 aa).

It belongs to the lyase 1 family. Argininosuccinate lyase subfamily.

It localises to the cytoplasm. The enzyme catalyses 2-(N(omega)-L-arginino)succinate = fumarate + L-arginine. It participates in amino-acid biosynthesis; L-arginine biosynthesis; L-arginine from L-ornithine and carbamoyl phosphate: step 3/3. In Pseudomonas syringae pv. syringae (strain B728a), this protein is Argininosuccinate lyase.